A 351-amino-acid chain; its full sequence is MSTIVTIPRSVSWKGDAIAVLNQTKLPHSTEYKTLTTIEEVWKSIVMLEVRGAPAIGIVAAFGLALVAKKYTTLHIEEFQKKFNRDCNYLGTSRPTAVNLFWAIDRMRESIQEITTIKEAQKILEEEALLIQQEDEAVCRSIGEHALSCFQDGDNILTICNAGSIATAKYGTALAPFYIGKEKGVHLHAYACETRPVLQGGRLTTWELKQAGIDVTLITDNTAAHAIQTKEINAIIVGADRIVANGDTANKIGTMNLAILAKYFGIPFYVAAPLSTFDITKQTGAEIVIEERDETEVTKIFGKQVTPVGTTVYNPAFDVTPNELITGIITERGIIRGDYKREIASLFEKTS.

Residues 51 to 53 (RGA), Arg94, and Gln199 each bind substrate. The active-site Proton donor is Asp240. 250-251 (NK) contacts substrate.

The protein belongs to the eIF-2B alpha/beta/delta subunits family. MtnA subfamily. In terms of assembly, homodimer.

The catalysed reaction is 5-(methylsulfanyl)-alpha-D-ribose 1-phosphate = 5-(methylsulfanyl)-D-ribulose 1-phosphate. It functions in the pathway amino-acid biosynthesis; L-methionine biosynthesis via salvage pathway; L-methionine from S-methyl-5-thio-alpha-D-ribose 1-phosphate: step 1/6. In terms of biological role, catalyzes the interconversion of methylthioribose-1-phosphate (MTR-1-P) into methylthioribulose-1-phosphate (MTRu-1-P). This is Methylthioribose-1-phosphate isomerase from Bacillus cereus (strain ATCC 10987 / NRS 248).